A 617-amino-acid polypeptide reads, in one-letter code: Autophagy-related protein 20 (617 aa).

The tract at residues 1-83 (MWNDEDNNPY…KRKPGGYDSR (83 aa)) is disordered. Positions 20–31 (QSSSINPTSPST) are enriched in low complexity. The span at 48-58 (DNEHNHGVIHD) shows a compositional bias: basic and acidic residues. Over residues 59–68 (DSDDDDEDLT) the composition is skewed to acidic residues. One can recognise a PX domain in the interval 89-209 (YENPKLSILI…RFFDPNASWS (121 aa)). A 1,2-diacyl-sn-glycero-3-phospho-(1D-myo-inositol-3-phosphate) contacts are provided by R126, S128, K152, and R175. A coiled-coil region spans residues 403-440 (QQDLTTEELSKKRALLDQLEQSEAEARRIENYLSSSQQ). Residues 434–516 (YLSSSQQISP…SGNSITNKIF (83 aa)) are disordered. The segment covering 454-463 (PPSHQRRDGS) has biased composition (basic and acidic residues). Residues 480-500 (DFSSHTPSASQGLPERSTSVP) show a composition bias toward polar residues.

Belongs to the sorting nexin family. Forms a complex with SNX4/ATG24 and ATG17.

The protein resides in the endosome membrane. It is found in the preautophagosomal structure membrane. In terms of biological role, required for cytoplasm to vacuole transport (Cvt), pexophagy and mitophagy. Also involved in endoplasmic reticulum-specific autophagic process and is essential for the survival of cells subjected to severe ER stress. Functions in protein retrieval from the endocytic pathway. Required for proper sorting of the v-SNARE protein SNC1. Autophagy is required for proper vegetative growth, asexual/sexual reproduction, and full virulence. Autophagy is particularly involved in the biosynthesis of deoxynivalenol (DON), an important virulence determinant. This is Autophagy-related protein 20 from Gibberella zeae (strain ATCC MYA-4620 / CBS 123657 / FGSC 9075 / NRRL 31084 / PH-1) (Wheat head blight fungus).